Consider the following 204-residue polypeptide: Methylthioribulose-1-phosphate dehydratase (204 aa).

Zn(2+) is bound by residues H96 and H98.

This sequence belongs to the aldolase class II family. MtnB subfamily. Requires Zn(2+) as cofactor.

It catalyses the reaction 5-(methylsulfanyl)-D-ribulose 1-phosphate = 5-methylsulfanyl-2,3-dioxopentyl phosphate + H2O. It functions in the pathway amino-acid biosynthesis; L-methionine biosynthesis via salvage pathway; L-methionine from S-methyl-5-thio-alpha-D-ribose 1-phosphate: step 2/6. Its function is as follows. Catalyzes the dehydration of methylthioribulose-1-phosphate (MTRu-1-P) into 2,3-diketo-5-methylthiopentyl-1-phosphate (DK-MTP-1-P). This chain is Methylthioribulose-1-phosphate dehydratase, found in Methylococcus capsulatus (strain ATCC 33009 / NCIMB 11132 / Bath).